The primary structure comprises 335 residues: DNA-directed RNA polymerase subunit alpha (335 aa).

The tract at residues 1–231 is alpha N-terminal domain (alpha-NTD); the sequence is MVREKITVST…DLLIPFLHTK (231 aa). The tract at residues 263 to 335 is alpha C-terminal domain (alpha-CTD); sequence KKMALKSIFI…FVIDLPKNKF (73 aa).

This sequence belongs to the RNA polymerase alpha chain family. As to quaternary structure, in plastids the minimal PEP RNA polymerase catalytic core is composed of four subunits: alpha, beta, beta', and beta''. When a (nuclear-encoded) sigma factor is associated with the core the holoenzyme is formed, which can initiate transcription.

The protein localises to the plastid. It localises to the chloroplast. The enzyme catalyses RNA(n) + a ribonucleoside 5'-triphosphate = RNA(n+1) + diphosphate. DNA-dependent RNA polymerase catalyzes the transcription of DNA into RNA using the four ribonucleoside triphosphates as substrates. This chain is DNA-directed RNA polymerase subunit alpha, found in Lactuca sativa (Garden lettuce).